Consider the following 115-residue polypeptide: T cell receptor beta variable 12-5 (115 aa).

The first 21 residues, 1 to 21, serve as a signal peptide directing secretion; the sequence is MATRLLCCVVLCLLGEELIDA. Positions 22 to 115 constitute an Ig-like domain; sequence RVTQTPRHKV…SAVYFCASGL (94 aa). Cys42 and Cys111 form a disulfide bridge.

As to quaternary structure, alpha-beta TR is a heterodimer composed of an alpha and beta chain; disulfide-linked. The alpha-beta TR is associated with the transmembrane signaling CD3 coreceptor proteins to form the TR-CD3 (TcR or TCR). The assembly of alpha-beta TR heterodimers with CD3 occurs in the endoplasmic reticulum where a single alpha-beta TR heterodimer associates with one CD3D-CD3E heterodimer, one CD3G-CD3E heterodimer and one CD247 homodimer forming a stable octameric structure. CD3D-CD3E and CD3G-CD3E heterodimers preferentially associate with TR alpha and TR beta chains, respectively. The association of the CD247 homodimer is the last step of TcR assembly in the endoplasmic reticulum and is required for transport to the cell surface.

The protein resides in the cell membrane. Its function is as follows. V region of the variable domain of T cell receptor (TR) beta chain that participates in the antigen recognition. Alpha-beta T cell receptors are antigen specific receptors which are essential to the immune response and are present on the cell surface of T lymphocytes. Recognize peptide-major histocompatibility (MH) (pMH) complexes that are displayed by antigen presenting cells (APC), a prerequisite for efficient T cell adaptive immunity against pathogens. Binding of alpha-beta TR to pMH complex initiates TR-CD3 clustering on the cell surface and intracellular activation of LCK that phosphorylates the ITAM motifs of CD3G, CD3D, CD3E and CD247 enabling the recruitment of ZAP70. In turn ZAP70 phosphorylates LAT, which recruits numerous signaling molecules to form the LAT signalosome. The LAT signalosome propagates signal branching to three major signaling pathways, the calcium, the mitogen-activated protein kinase (MAPK) kinase and the nuclear factor NF-kappa-B (NF-kB) pathways, leading to the mobilization of transcription factors that are critical for gene expression and essential for T cell growth and differentiation. The T cell repertoire is generated in the thymus, by V-(D)-J rearrangement. This repertoire is then shaped by intrathymic selection events to generate a peripheral T cell pool of self-MH restricted, non-autoaggressive T cells. Post-thymic interaction of alpha-beta TR with the pMH complexes shapes TR structural and functional avidity. The chain is T cell receptor beta variable 12-5 from Homo sapiens (Human).